Consider the following 96-residue polypeptide: Small ribosomal subunit protein bS18 (96 aa).

Belongs to the bacterial ribosomal protein bS18 family. In terms of assembly, part of the 30S ribosomal subunit. Forms a tight heterodimer with protein bS6.

Binds as a heterodimer with protein bS6 to the central domain of the 16S rRNA, where it helps stabilize the platform of the 30S subunit. The sequence is that of Small ribosomal subunit protein bS18 from Borreliella afzelii (strain PKo) (Borrelia afzelii).